The primary structure comprises 497 residues: IWS1-like protein (497 aa).

Positions 1–191 (MSDHEGASPA…SDRRGGRNFE (191 aa)) are disordered. 2 stretches are compositionally biased toward low complexity: residues 7 to 23 (ASPASSAPSSPLVPVSP) and 47 to 57 (PLAPRSPASPR). Composition is skewed to basic and acidic residues over residues 123–134 (EGDKQQKRKDLF), 144–160 (DRPKKQNDDLDELVKGD), and 181–191 (PSDRRGGRNFE). In terms of domain architecture, TFIIS N-terminal spans 281 to 361 (SALSEWLAPL…GEWARPIYHL (81 aa)). The interval 369–433 (SRQEREERDY…GDKGYINRAR (65 aa)) is disordered. Basic and acidic residues-rich tracts occupy residues 370–382 (RQEREERDYSRMP) and 401–411 (APKRPRIRDAE).

The protein belongs to the IWS1 family.

It is found in the nucleus. In Caenorhabditis briggsae, this protein is IWS1-like protein.